A 329-amino-acid polypeptide reads, in one-letter code: Cytosolic arginine sensor for mTORC1 subunit 1 (329 aa).

Ser-14 is subject to Phosphoserine. ACT domains follow at residues 72–138 and 260–321; these read AEAT…HTLA and GELW…EVLQ. L-arginine-binding positions include 111–112, Gly-274, 280–281, and 300–304; these read SV, IV, and TFNFD.

It belongs to the GATS family. In terms of assembly, forms homodimers and heterodimers with CASTOR2. Interacts with the GATOR2 complex which is composed of MIOS, SEC13, SEH1L, WDR24 and WDR59; the interaction is negatively regulated by arginine. Interacts with TM4SF5; the interaction is positively regulated by leucine and is negatively regulated by arginine. Phosphorylation at Ser-14 by AKT1, promoting the interaction between CASTOR1 and RNF167. Post-translationally, ubiquitinated by RNF167 via 'Lys-29'-polyubiquitination, leading to its degradation, releasing the GATOR2 complex. Ubiquitination by RNF167 is promoted by phosphorylation at Ser-14 by AKT1.

The protein localises to the cytoplasm. It is found in the cytosol. In terms of biological role, functions as an intracellular arginine sensor within the amino acid-sensing branch of the TORC1 signaling pathway. As a homodimer or a heterodimer with CASTOR2, binds and inhibits the GATOR subcomplex GATOR2 and thereby mTORC1. Binding of arginine to CASTOR1 allosterically disrupts the interaction of CASTOR1-containing dimers with GATOR2 which can in turn activate mTORC1 and the TORC1 signaling pathway. In Pongo abelii (Sumatran orangutan), this protein is Cytosolic arginine sensor for mTORC1 subunit 1.